Reading from the N-terminus, the 491-residue chain is NADH-quinone oxidoreductase subunit N 1 (491 aa).

The next 14 helical transmembrane spans lie at 9-29, 38-58, 76-96, 104-124, 126-146, 161-181, 211-231, 246-266, 276-296, 304-324, 329-349, 375-395, 410-432, and 461-481; these read IAAPLLALAAGALLILLLDLL, PMYVAAVGAVLVAGWYLVPLW, FAAVYGLVLLGAALLAILLSF, SGYLALLLWAAMGMVLLGGAG, LMVIFLGIELLSLALYVMIAF, FVLGSVAAAFLIFGFALIYGA, VGVGLAIVGLAFKMALVPFHI, AFMAIGTKAAAFAAMARLLVA, FLLPLSILAFASMMLGATVGI, LMAYSGIANAGYLIMAIPGLG, SAAAYYLAAYGFATMGVFAVV, VGVCLAVLFFGLIGVPPTGGF, AWIVLTGLILSTGISAYVYLKVI, and VVLAIATAGTLVLGVLPGPVS.

It belongs to the complex I subunit 2 family. NDH-1 is composed of 14 different subunits. Subunits NuoA, H, J, K, L, M, N constitute the membrane sector of the complex.

The protein resides in the cell membrane. It catalyses the reaction a quinone + NADH + 5 H(+)(in) = a quinol + NAD(+) + 4 H(+)(out). Functionally, NDH-1 shuttles electrons from NADH, via FMN and iron-sulfur (Fe-S) centers, to quinones in the respiratory chain. The immediate electron acceptor for the enzyme in this species is believed to be a menaquinone. Couples the redox reaction to proton translocation (for every two electrons transferred, four hydrogen ions are translocated across the cytoplasmic membrane), and thus conserves the redox energy in a proton gradient. This Symbiobacterium thermophilum (strain DSM 24528 / JCM 14929 / IAM 14863 / T) protein is NADH-quinone oxidoreductase subunit N 1.